The sequence spans 145 residues: D-aminoacyl-tRNA deacylase (145 aa).

A Gly-cisPro motif, important for rejection of L-amino acids motif is present at residues 137 to 138 (GP).

The protein belongs to the DTD family. In terms of assembly, homodimer.

The protein localises to the cytoplasm. It carries out the reaction glycyl-tRNA(Ala) + H2O = tRNA(Ala) + glycine + H(+). The catalysed reaction is a D-aminoacyl-tRNA + H2O = a tRNA + a D-alpha-amino acid + H(+). Its function is as follows. An aminoacyl-tRNA editing enzyme that deacylates mischarged D-aminoacyl-tRNAs. Also deacylates mischarged glycyl-tRNA(Ala), protecting cells against glycine mischarging by AlaRS. Acts via tRNA-based rather than protein-based catalysis; rejects L-amino acids rather than detecting D-amino acids in the active site. By recycling D-aminoacyl-tRNA to D-amino acids and free tRNA molecules, this enzyme counteracts the toxicity associated with the formation of D-aminoacyl-tRNA entities in vivo and helps enforce protein L-homochirality. This is D-aminoacyl-tRNA deacylase from Sodalis glossinidius (strain morsitans).